Here is a 405-residue protein sequence, read N- to C-terminus: uncharacterized protein (405 aa).

10 helical membrane passes run 9-29, 41-61, 74-94, 98-118, 138-158, 168-190, 227-247, 252-272, 291-311, and 373-393; these read VFAL…VTIV, VFLA…ASFC, VLAG…YSVT, QAFF…GAFF, ANGV…GLGG, LVVG…LHVN, ALAG…AVLH, WWGM…VIAI, LVMS…LCAL, and IAFI…LAQP.

This sequence belongs to the major facilitator superfamily. Drug:H(+) antiporter-3 (DHA3) (TC 2.A.1.21) family.

The protein resides in the cell membrane. This is an uncharacterized protein from Bacillus subtilis (strain 168).